A 44-amino-acid chain; its full sequence is Thymosin beta-10 (44 aa).

It belongs to the thymosin beta family.

It localises to the cytoplasm. The protein localises to the cytoskeleton. Its function is as follows. Plays an important role in the organization of the cytoskeleton. Binds to and sequesters actin monomers (G actin) and therefore inhibits actin polymerization. This Torpedo marmorata (Marbled electric ray) protein is Thymosin beta-10.